A 286-amino-acid chain; its full sequence is Shikimate dehydrogenase (NADP(+)) (286 aa).

Shikimate contacts are provided by residues 19-21 (SVS) and T66. The active-site Proton acceptor is K70. The shikimate site is built by N91 and D106. Residues 130–134 (GAGGS) and A225 contribute to the NADP(+) site. Y227 contributes to the shikimate binding site. G248 serves as a coordination point for NADP(+).

It belongs to the shikimate dehydrogenase family. Homodimer.

It carries out the reaction shikimate + NADP(+) = 3-dehydroshikimate + NADPH + H(+). Its pathway is metabolic intermediate biosynthesis; chorismate biosynthesis; chorismate from D-erythrose 4-phosphate and phosphoenolpyruvate: step 4/7. Involved in the biosynthesis of the chorismate, which leads to the biosynthesis of aromatic amino acids. Catalyzes the reversible NADPH linked reduction of 3-dehydroshikimate (DHSA) to yield shikimate (SA). In Dehalococcoides mccartyi (strain ATCC BAA-2100 / JCM 16839 / KCTC 5957 / BAV1), this protein is Shikimate dehydrogenase (NADP(+)).